A 275-amino-acid chain; its full sequence is NAD(P)H-hydrate epimerase (275 aa).

The YjeF N-terminal domain maps to 49–258; the sequence is AIKIDQELFS…ALAAKYELNL (210 aa). (6S)-NADPHX is bound at residue 102–106; that stretch reads NNGGD. Positions 103 and 167 each coordinate K(+). (6S)-NADPHX contacts are provided by residues 171–177 and D200; that span reads GFSFKPP. S203 provides a ligand contact to K(+).

The protein belongs to the NnrE/AIBP family. K(+) is required as a cofactor.

It catalyses the reaction (6R)-NADHX = (6S)-NADHX. The enzyme catalyses (6R)-NADPHX = (6S)-NADPHX. In terms of biological role, catalyzes the epimerization of the S- and R-forms of NAD(P)HX, a damaged form of NAD(P)H that is a result of enzymatic or heat-dependent hydration. This is a prerequisite for the S-specific NAD(P)H-hydrate dehydratase to allow the repair of both epimers of NAD(P)HX. The polypeptide is NAD(P)H-hydrate epimerase (Ixodes scapularis (Black-legged tick)).